A 624-amino-acid chain; its full sequence is Matrilin-4 (624 aa).

Residues 1-21 (MRGPCCWPLSLLLLFLQSWET) form the signal peptide. The VWFA 1 domain maps to 36–215 (DLVFMIDSSR…EFGLQFQGRL (180 aa)). Asparagine 71 carries an N-linked (GlcNAc...) asparagine glycan. 4 consecutive EGF-like domains span residues 217–257 (GKDL…KNCL), 258–298 (ALDL…RSCR), 299–339 (AIDY…RSCR), and 340–380 (VRDF…KSCD). Disulfide bonds link cysteine 221/cysteine 232, cysteine 228/cysteine 241, cysteine 243/cysteine 256, cysteine 262/cysteine 273, cysteine 269/cysteine 282, cysteine 284/cysteine 297, cysteine 303/cysteine 314, cysteine 310/cysteine 323, cysteine 325/cysteine 338, cysteine 344/cysteine 355, cysteine 351/cysteine 364, and cysteine 366/cysteine 379. A glycan (N-linked (GlcNAc...) asparagine) is linked at asparagine 307. The VWFA 2 domain occupies 388-563 (DLVLLVDGSK…STMTHLLENL (176 aa)). Residues 590-623 (EFQGRTLGALESLTQNLARLTERLEELENQLASR) adopt a coiled-coil conformation.

As to quaternary structure, interacts with COMP. In terms of tissue distribution, lung, brain, sternum, kidney and heart.

The protein localises to the secreted. Its function is as follows. Major component of the extracellular matrix of cartilage. This Mus musculus (Mouse) protein is Matrilin-4 (Matn4).